We begin with the raw amino-acid sequence, 249 residues long: MSNDSSECSQKLPKLKRILLKLSGESLSADQGFGINVESAQPIINQIKTLTNFGVELALVVGGGNILRGGRANFGNKIRRATADSMGMIATMINALALRDMLISEGVDAEVFSAKGVDGLLKVASAHEFNQELAKGRVLIFAGGTGNPFVTTDTTASLRAVEIGADALLKATTVNGVYDKDPNKYSDAKRFDKVTFSEVVSKELNVMDLGAFTQCRDFGIPIYVFDLTQPNALVDAVLDSKYGTWVTLD.

Residue 21-24 coordinates ATP; the sequence is KLSG. A UMP-binding site is contributed by glycine 63. Positions 64 and 68 each coordinate ATP. UMP contacts are provided by residues aspartate 84 and 145–152; that span reads TGNPFVTT. Positions 172, 178, and 181 each coordinate ATP.

The protein belongs to the UMP kinase family. As to quaternary structure, homohexamer.

The protein localises to the cytoplasm. The catalysed reaction is UMP + ATP = UDP + ADP. It participates in pyrimidine metabolism; CTP biosynthesis via de novo pathway; UDP from UMP (UMPK route): step 1/1. Its activity is regulated as follows. Inhibited by UTP. In terms of biological role, catalyzes the reversible phosphorylation of UMP to UDP. This Francisella tularensis subsp. tularensis (strain FSC 198) protein is Uridylate kinase.